The following is a 540-amino-acid chain: Chaperonin GroEL (540 aa).

Residues 30-33, Lys51, 87-91, Gly415, and Asp495 contribute to the ATP site; these read TLGP and DGTTT.

The protein belongs to the chaperonin (HSP60) family. In terms of assembly, forms a cylinder of 14 subunits composed of two heptameric rings stacked back-to-back. Interacts with the co-chaperonin GroES.

The protein localises to the cytoplasm. It catalyses the reaction ATP + H2O + a folded polypeptide = ADP + phosphate + an unfolded polypeptide.. In terms of biological role, together with its co-chaperonin GroES, plays an essential role in assisting protein folding. The GroEL-GroES system forms a nano-cage that allows encapsulation of the non-native substrate proteins and provides a physical environment optimized to promote and accelerate protein folding. The chain is Chaperonin GroEL from Rhodothermus marinus (Rhodothermus obamensis).